Here is a 382-residue protein sequence, read N- to C-terminus: S-adenosylmethionine decarboxylase proenzyme (382 aa).

Phenylalanine 32 serves as a coordination point for substrate. Residues glutamate 33 and glutamate 36 contribute to the active site. Leucine 87 is a binding site for substrate. The active-site Schiff-base intermediate with substrate; via pyruvic acid is serine 90. At serine 90 the chain carries Pyruvic acid (Ser); by autocatalysis. The Proton donor; for catalytic activity role is filled by cysteine 104. Phenylalanine 248 contacts substrate. Active-site proton acceptor; for processing activity residues include serine 254 and histidine 267. Glutamate 271 serves as a coordination point for substrate.

Belongs to the eukaryotic AdoMetDC family. In terms of assembly, heterotetramer of two alpha and two beta chains. Pyruvate serves as cofactor. In terms of processing, is synthesized initially as an inactive proenzyme. Formation of the active enzyme involves a self-maturation process in which the active site pyruvoyl group is generated from an internal serine residue via an autocatalytic post-translational modification. Two non-identical subunits are generated from the proenzyme in this reaction, and the pyruvate is formed at the N-terminus of the alpha chain, which is derived from the carboxyl end of the proenzyme. The post-translation cleavage follows an unusual pathway, termed non-hydrolytic serinolysis, in which the side chain hydroxyl group of the serine supplies its oxygen atom to form the C-terminus of the beta chain, while the remainder of the serine residue undergoes an oxidative deamination to produce ammonia and the pyruvoyl group blocking the N-terminus of the alpha chain.

It carries out the reaction S-adenosyl-L-methionine + H(+) = S-adenosyl 3-(methylsulfanyl)propylamine + CO2. It functions in the pathway amine and polyamine biosynthesis; S-adenosylmethioninamine biosynthesis; S-adenosylmethioninamine from S-adenosyl-L-methionine: step 1/1. The sequence is that of S-adenosylmethionine decarboxylase proenzyme from Leishmania donovani.